A 143-amino-acid chain; its full sequence is Insulin-like growth factor 1 (143 aa).

The signal sequence occupies residues 1–32 (MITPTVKMRILSSSHLFYLALCLLTFTSSATA). Positions 33 to 61 (GPETLCGAELVDALQFVCGDRGFYFNKPT) are b. Cystine bridges form between Cys-38-Cys-80, Cys-50-Cys-93, and Cys-79-Cys-84. Positions 62-73 (GYGSSSRRAPQT) are c. An a region spans residues 74–94 (GIVDECCFRSCDLRRLEMYCA). The d stretch occupies residues 95–102 (PLKPAKAA). Residues 99 to 143 (AKAARSVRAQRHTDMPKTQKYQPPSTNKKMKSQRRRKGSTFEEHK) are disordered. The propeptide at 103–143 (RSVRAQRHTDMPKTQKYQPPSTNKKMKSQRRRKGSTFEEHK) is e peptide. Residues 126-136 (KKMKSQRRRKG) are compositionally biased toward basic residues.

It belongs to the insulin family. Forms a ternary complex with IGFR1 and ITGAV:ITGB3. Forms a ternary complex with IGFR1 and ITGA6:ITGB4. Forms a ternary complex with IGFBP3 and ALS.

The protein resides in the secreted. The insulin-like growth factors, isolated from plasma, are structurally and functionally related to insulin but have a much higher growth-promoting activity. May be a physiological regulator of [1-14C]-2-deoxy-D-glucose (2DG) transport and glycogen synthesis in osteoblasts. Stimulates glucose transport in bone-derived osteoblastic (PyMS) cells and is effective at much lower concentrations than insulin, not only regarding glycogen and DNA synthesis but also with regard to enhancing glucose uptake. May play a role in synapse maturation. Ca(2+)-dependent exocytosis of IGF1 is required for sensory perception of smell in the olfactory bulb. Acts as a ligand for IGF1R. Binds to the alpha subunit of IGF1R, leading to the activation of the intrinsic tyrosine kinase activity which autophosphorylates tyrosine residues in the beta subunit thus initiating a cascade of down-stream signaling events leading to activation of the PI3K-AKT/PKB and the Ras-MAPK pathways. Binds to integrins ITGAV:ITGB3 and ITGA6:ITGB4. Its binding to integrins and subsequent ternary complex formation with integrins and IGFR1 are essential for IGF1 signaling. Induces the phosphorylation and activation of IGFR1, MAPK3/ERK1, MAPK1/ERK2 and AKT1. As part of the MAPK/ERK signaling pathway, acts as a negative regulator of apoptosis in cardiomyocytes via promotion of STUB1/CHIP-mediated ubiquitination and degradation of ICER-type isoforms of CREM. This Oryctolagus cuniculus (Rabbit) protein is Insulin-like growth factor 1.